The sequence spans 690 residues: Elongation factor G (690 aa).

The region spanning 8–283 is the tr-type G domain; the sequence is EDYRNFGIMA…AVVDYLPSPV (276 aa). Residues 17 to 24, 81 to 85, and 135 to 138 contribute to the GTP site; these read AHIDAGKT, DTPGH, and NKMD.

The protein belongs to the TRAFAC class translation factor GTPase superfamily. Classic translation factor GTPase family. EF-G/EF-2 subfamily.

It is found in the cytoplasm. Functionally, catalyzes the GTP-dependent ribosomal translocation step during translation elongation. During this step, the ribosome changes from the pre-translocational (PRE) to the post-translocational (POST) state as the newly formed A-site-bound peptidyl-tRNA and P-site-bound deacylated tRNA move to the P and E sites, respectively. Catalyzes the coordinated movement of the two tRNA molecules, the mRNA and conformational changes in the ribosome. This Rhodopseudomonas palustris (strain BisA53) protein is Elongation factor G.